Here is a 112-residue protein sequence, read N- to C-terminus: Nucleoid-associated protein Pfl01_1806 (112 aa).

Belongs to the YbaB/EbfC family. As to quaternary structure, homodimer.

It localises to the cytoplasm. The protein resides in the nucleoid. Functionally, binds to DNA and alters its conformation. May be involved in regulation of gene expression, nucleoid organization and DNA protection. This is Nucleoid-associated protein Pfl01_1806 from Pseudomonas fluorescens (strain Pf0-1).